The following is a 174-amino-acid chain: Transcription antitermination protein NusB (174 aa).

Over residues 1-11 (MSEVETTNDQT) the composition is skewed to polar residues. Positions 1 to 29 (MSEVETTNDQTPAPKRKDKKPSRSQLRSA) are disordered.

It belongs to the NusB family.

In terms of biological role, involved in transcription antitermination. Required for transcription of ribosomal RNA (rRNA) genes. Binds specifically to the boxA antiterminator sequence of the ribosomal RNA (rrn) operons. The chain is Transcription antitermination protein NusB from Marinomonas sp. (strain MWYL1).